The primary structure comprises 698 residues: Glycine--tRNA ligase beta subunit (698 aa).

The protein belongs to the class-II aminoacyl-tRNA synthetase family. As to quaternary structure, tetramer of two alpha and two beta subunits.

It is found in the cytoplasm. The catalysed reaction is tRNA(Gly) + glycine + ATP = glycyl-tRNA(Gly) + AMP + diphosphate. The protein is Glycine--tRNA ligase beta subunit of Xanthomonas campestris pv. campestris (strain 8004).